We begin with the raw amino-acid sequence, 614 residues long: Serine/threonine-protein kinase Pkn1 (614 aa).

Positions 13–276 (YKVIAELGHG…TSGEQLQVTL (264 aa)) constitute a Protein kinase domain. ATP contacts are provided by residues 19–27 (LGHGLWSRD) and Lys-42.

The protein belongs to the protein kinase superfamily. Ser/Thr protein kinase family. As to quaternary structure, interacts with PknD, interacts with and phosphorylates IncG. Autophosphorylates on serine and threonine residues. Present in elementary bodies 40 hours post-infection as 2 proteins of approximately 70 and 65 kDa; the smaller one may be due to differential phosphorylation or degradation.

The catalysed reaction is L-seryl-[protein] + ATP = O-phospho-L-seryl-[protein] + ADP + H(+). It catalyses the reaction L-threonyl-[protein] + ATP = O-phospho-L-threonyl-[protein] + ADP + H(+). Together with the serine/threonine kinase PknD, may play a role in specific interactions with host proteins during host intracellular growth. Autophosphorylates and phosphorylates IncG, an inclusion-membrane protein required for the modification of the nascent chlamydial inclusion. The sequence is that of Serine/threonine-protein kinase Pkn1 (pkn1) from Chlamydia trachomatis serovar L2 (strain ATCC VR-902B / DSM 19102 / 434/Bu).